We begin with the raw amino-acid sequence, 904 residues long: Pyrimidine pathway regulatory protein 1 (904 aa).

Residues 1–11 (MKQKKFNSKKS) are compositionally biased toward basic residues. Residues 1–27 (MKQKKFNSKKSNRTDLSKRGDSPNIGI) form a disordered region. Over residues 12–21 (NRTDLSKRGD) the composition is skewed to basic and acidic residues. The Zn(2+) site is built by Cys34, Cys37, Cys44, Cys51, Cys54, and Cys61. The zn(2)-C6 fungal-type DNA-binding region spans 34 to 61 (CKRCRLKKIKCDQEFPSCKRCAKLEVPC). Residues 883 to 904 (GNEGESSYDISKGKNSESGGIF) form a disordered region.

In terms of assembly, binds DNA as a homodimer.

Its subcellular location is the nucleus. Functionally, positive regulator of URA1 and URA3 expression. The chain is Pyrimidine pathway regulatory protein 1 (PPR1) from Saccharomyces cerevisiae (strain ATCC 204508 / S288c) (Baker's yeast).